A 300-amino-acid polypeptide reads, in one-letter code: MADLSTSVAGIRLENPLMLASGILDENGYTMLDVMNNGAAAVVTKSIGMEERNGYSAPVIVEYGDSLINAVGLSNPGIDNFAEEIRIAKRSGKPVIGSVFASDAESFVNLGRKMQEYGCDAVELNLSCPHVKGFGLEVGSDPDLVEDIVNEMKSKISVPVFAKLSPNVSDIIEIAKAAEKADAYVLINTVKAMKIDIRARMPVLTNAYGGLSGPAIKPVGVRYVYEVKKETGKDIIGVGGITTYEDAVEYIMAGASAVQIGTALYTVGKSVFRNIISQMNTFMDDEKFHSIQDMVGVAIR.

FMN contacts are provided by residues Ser-21 and 45-46; that span reads KS. Residues Lys-45, 69–73, and Asn-125 each bind substrate; that span reads NAVGL. Asn-125 provides a ligand contact to FMN. The Nucleophile role is filled by Cys-128. Residues Lys-163 and Ile-187 each coordinate FMN. A substrate-binding site is contributed by 188-189; sequence NT. FMN-binding positions include Gly-213, 239–240, and 261–262; these read GG and GT.

Belongs to the dihydroorotate dehydrogenase family. Type 1 subfamily. Heterotetramer of 2 PyrK and 2 PyrD type B subunits. Requires FMN as cofactor.

The protein resides in the cytoplasm. The catalysed reaction is (S)-dihydroorotate + NAD(+) = orotate + NADH + H(+). The protein operates within pyrimidine metabolism; UMP biosynthesis via de novo pathway; orotate from (S)-dihydroorotate (NAD(+) route): step 1/1. Catalyzes the conversion of dihydroorotate to orotate with NAD(+) as electron acceptor. The polypeptide is Dihydroorotate dehydrogenase B (NAD(+)), catalytic subunit (pyrD) (Thermoplasma acidophilum (strain ATCC 25905 / DSM 1728 / JCM 9062 / NBRC 15155 / AMRC-C165)).